The sequence spans 240 residues: Large ribosomal subunit protein uL2 (240 aa).

The segment covering 1 to 11 has biased composition (polar residues); that stretch reads MGKRLISQNRG. 2 disordered regions span residues 1–25 and 207–240; these read MGKRLISQNRGRGTPKYRSPTHKRK and GGRHQHIGKPSSVSRHTSPGRKVGHIASRRTGKR. Basic residues-rich tracts occupy residues 13-25 and 224-240; these read GTPKYRSPTHKRK and SPGRKVGHIASRRTGKR.

Belongs to the universal ribosomal protein uL2 family. As to quaternary structure, part of the 50S ribosomal subunit. Forms a bridge to the 30S subunit in the 70S ribosome.

In terms of biological role, one of the primary rRNA binding proteins. Required for association of the 30S and 50S subunits to form the 70S ribosome, for tRNA binding and peptide bond formation. It has been suggested to have peptidyltransferase activity; this is somewhat controversial. Makes several contacts with the 16S rRNA in the 70S ribosome. The polypeptide is Large ribosomal subunit protein uL2 (Methanococcus maripaludis (strain DSM 14266 / JCM 13030 / NBRC 101832 / S2 / LL)).